Consider the following 306-residue polypeptide: Glutaminase (306 aa).

Substrate-binding residues include Ser61, Asn111, Glu157, Asn164, Tyr188, Tyr240, and Val258.

The protein belongs to the glutaminase family. As to quaternary structure, homotetramer.

The catalysed reaction is L-glutamine + H2O = L-glutamate + NH4(+). In Pseudoalteromonas atlantica (strain T6c / ATCC BAA-1087), this protein is Glutaminase.